Reading from the N-terminus, the 90-residue chain is Bombyxin B-9 (90 aa).

A signal peptide spans 1 to 20 (MMKTAVMFILVVVISLTYSS). Cystine bridges form between Cys30–Cys75, Cys42–Cys88, and Cys74–Cys79. The propeptide at 49-64 (GGAQYAPYWQETYLRS) is c peptide like.

The protein belongs to the insulin family. Heterodimer of a B chain and an A chain linked by two disulfide bonds.

It is found in the secreted. Brain peptide responsible for activation of prothoracic glands to produce ecdysone in insects. This chain is Bombyxin B-9 (BBXB9), found in Bombyx mori (Silk moth).